Reading from the N-terminus, the 358-residue chain is Alanine racemase (358 aa).

K35 acts as the Proton acceptor; specific for D-alanine in catalysis. Position 35 is an N6-(pyridoxal phosphate)lysine (K35). A substrate-binding site is contributed by R130. Y255 acts as the Proton acceptor; specific for L-alanine in catalysis. A substrate-binding site is contributed by M303.

This sequence belongs to the alanine racemase family. It depends on pyridoxal 5'-phosphate as a cofactor.

The catalysed reaction is L-alanine = D-alanine. It functions in the pathway amino-acid biosynthesis; D-alanine biosynthesis; D-alanine from L-alanine: step 1/1. In terms of biological role, catalyzes the interconversion of L-alanine and D-alanine. May also act on other amino acids. In Shewanella putrefaciens (strain CN-32 / ATCC BAA-453), this protein is Alanine racemase (alr).